A 217-amino-acid chain; its full sequence is Octanoyltransferase (217 aa).

Positions 32 to 207 (SDSPDELWIV…TLSQLLGYQQ (176 aa)) constitute a BPL/LPL catalytic domain. Substrate-binding positions include 71 to 78 (RGGQVTYH), 138 to 140 (SLG), and 151 to 153 (GLA). Catalysis depends on C169, which acts as the Acyl-thioester intermediate.

Belongs to the LipB family.

It is found in the cytoplasm. It carries out the reaction octanoyl-[ACP] + L-lysyl-[protein] = N(6)-octanoyl-L-lysyl-[protein] + holo-[ACP] + H(+). It participates in protein modification; protein lipoylation via endogenous pathway; protein N(6)-(lipoyl)lysine from octanoyl-[acyl-carrier-protein]: step 1/2. Functionally, catalyzes the transfer of endogenously produced octanoic acid from octanoyl-acyl-carrier-protein onto the lipoyl domains of lipoate-dependent enzymes. Lipoyl-ACP can also act as a substrate although octanoyl-ACP is likely to be the physiological substrate. This chain is Octanoyltransferase, found in Shewanella sp. (strain ANA-3).